We begin with the raw amino-acid sequence, 106 residues long: UPF0145 protein CLL_A2504 (106 aa).

It belongs to the UPF0145 family.

In Clostridium botulinum (strain Eklund 17B / Type B), this protein is UPF0145 protein CLL_A2504.